A 490-amino-acid polypeptide reads, in one-letter code: MFSIINPSDDFWTKDKYIMLTIKGPVEWEAEIPGISTDFFCKFSNVPVPHFRDMHSPGAPDIKWITACTKMIDVILNYWNNKTAVPTPAKWYAQAENKAGRPSLTLLIALDGIPTATIGKHTTEIRGVLIKDFFDGNAPKIDDWCTYAKTKKNGGGTQVFSLSYIPFALLQIIRPQFQWAWTNINELGDVCDEIHRKHIISHFNKKPNVKLMLFPKDGTNRISLKSKFLGTIEWLSDLGIVTEDAWIRRDVRSYMQLLTLTHGDVLIHRALSISKKRIRATRKAIDFIAHIDTDFEIYENPVYQLFCLQSFDPILAGTILYQWLSHRRGKKNTVSFIGPPGCGKSMLTGAILENIPLHGILHGSLNTKNLRAYGQVLVLWWKDISINFENFNIIKSLLGGQKIIFPINENDHVQIGPCPIIATSCVDIRSMVHSNIHKINLSQRVYNFTFDKVIPRNFPVIQKDDINQFLFWARNRSINCFIDYTVPKIL.

A PV NS1-Nuc domain is found at 1–210 (MFSIINPSDD…SHFNKKPNVK (210 aa)). The region spanning 312-463 (DPILAGTILY…IPRNFPVIQK (152 aa)) is the SF3 helicase domain. ATP is bound at residue 338–345 (GPPGCGKS).

The protein resides in the host nucleus. The protein is Protein U94 (U94) of Human herpesvirus 6B (HHV-6 variant B).